The chain runs to 261 residues: Small ribosomal subunit protein eS1 (261 aa).

The segment covering 1–18 (MAVGKNKRISKGKKGGKK) has biased composition (basic residues). Residues 1–22 (MAVGKNKRISKGKKGGKKKAAD) are disordered.

This sequence belongs to the eukaryotic ribosomal protein eS1 family. Component of the small ribosomal subunit. Mature ribosomes consist of a small (40S) and a large (60S) subunit. The 40S subunit contains about 33 different proteins and 1 molecule of RNA (18S). The 60S subunit contains about 49 different proteins and 3 molecules of RNA (25S, 5.8S and 5S).

The protein localises to the cytoplasm. The protein is Small ribosomal subunit protein eS1 of Cicer arietinum (Chickpea).